The chain runs to 210 residues: Large ribosomal subunit protein uL3 (210 aa).

The interval 133–152 (ATHGNSLSHRVHGSTGQNQT) is disordered. N5-methylglutamine is present on Gln151.

The protein belongs to the universal ribosomal protein uL3 family. As to quaternary structure, part of the 50S ribosomal subunit. Forms a cluster with proteins L14 and L19. Methylated by PrmB.

Functionally, one of the primary rRNA binding proteins, it binds directly near the 3'-end of the 23S rRNA, where it nucleates assembly of the 50S subunit. This chain is Large ribosomal subunit protein uL3, found in Francisella tularensis subsp. holarctica (strain FTNF002-00 / FTA).